A 700-amino-acid polypeptide reads, in one-letter code: Elongation factor G (700 aa).

Residues 13–288 (SKIRNIGITA…AVIDYLPAPD (276 aa)) form the tr-type G domain. GTP-binding positions include 22 to 29 (AHIDAGKT), 86 to 90 (DTPGH), and 140 to 143 (NKLD).

The protein belongs to the TRAFAC class translation factor GTPase superfamily. Classic translation factor GTPase family. EF-G/EF-2 subfamily.

It localises to the cytoplasm. Its function is as follows. Catalyzes the GTP-dependent ribosomal translocation step during translation elongation. During this step, the ribosome changes from the pre-translocational (PRE) to the post-translocational (POST) state as the newly formed A-site-bound peptidyl-tRNA and P-site-bound deacylated tRNA move to the P and E sites, respectively. Catalyzes the coordinated movement of the two tRNA molecules, the mRNA and conformational changes in the ribosome. This Gluconobacter oxydans (strain 621H) (Gluconobacter suboxydans) protein is Elongation factor G.